A 218-amino-acid polypeptide reads, in one-letter code: Adenylate kinase (218 aa).

An ATP-binding site is contributed by 10–15; it reads GAGKGT. Residues 30 to 59 form an NMP region; that stretch reads STGDMLRAAVKAGTPLGQQAKAVMDAGQLV. AMP contacts are provided by residues threonine 31, arginine 36, 57 to 59, 85 to 88, and glutamine 92; these read QLV and GFPR. The tract at residues 122–159 is LID; that stretch reads GRRSHPASGRTYHVKFNPPKVEGQDDVTGEPLVQREDD. Residues arginine 123 and 132 to 133 contribute to the ATP site; that span reads TY. The disordered stretch occupies residues 127–151; the sequence is PASGRTYHVKFNPPKVEGQDDVTGE. Residues arginine 156 and arginine 167 each contribute to the AMP site. Residue glycine 203 coordinates ATP.

The protein belongs to the adenylate kinase family. Monomer.

The protein localises to the cytoplasm. It catalyses the reaction AMP + ATP = 2 ADP. Its pathway is purine metabolism; AMP biosynthesis via salvage pathway; AMP from ADP: step 1/1. In terms of biological role, catalyzes the reversible transfer of the terminal phosphate group between ATP and AMP. Plays an important role in cellular energy homeostasis and in adenine nucleotide metabolism. The protein is Adenylate kinase of Delftia acidovorans (strain DSM 14801 / SPH-1).